The sequence spans 450 residues: Benzene 1,2-dioxygenase subunit alpha (450 aa).

The region spanning 56-163 (LLGHETHIRK…VETYKGLIFA (108 aa)) is the Rieske domain. 4 residues coordinate [2Fe-2S] cluster: Cys-96, His-98, Cys-116, and His-119. His-222 and His-228 together coordinate Fe cation.

The protein belongs to the bacterial ring-hydroxylating dioxygenase alpha subunit family. In terms of assembly, this dioxygenase system consists of four proteins: the two subunits of the hydroxylase component (BedC1 and BedC2), a ferredoxin (BedB) and a ferredoxin reductase (BedA). [2Fe-2S] cluster serves as cofactor. Fe cation is required as a cofactor.

The enzyme catalyses benzene + NADH + O2 + H(+) = cis-1,2-dihydrobenzene-1,2-diol + NAD(+). It participates in aromatic compound metabolism; benzene degradation; catechol from benzene: step 1/2. The sequence is that of Benzene 1,2-dioxygenase subunit alpha (bedC1) from Pseudomonas putida (Arthrobacter siderocapsulatus).